The primary structure comprises 327 residues: Thioredoxin reductase sirT (327 aa).

FAD contacts are provided by residues 15 to 18 (AGPA), 37 to 42 (DTGVFR), His-50, and Ala-115. A disulfide bridge links Cys-139 with Cys-142. FAD contacts are provided by residues Asp-289 and 296-297 (QV).

Belongs to the class-II pyridine nucleotide-disulfide oxidoreductase family. In terms of assembly, homodimer. The cofactor is FAD.

The protein operates within mycotoxin biosynthesis. Its function is as follows. Thioredoxin reductase; part of the gene cluster that mediates the biosynthesis of sirodesmin PL, an epipolythiodioxopiperazine (ETP) characterized by a disulfide bridged cyclic dipeptide and that acts as a phytotoxin which is involved in the blackleg didease of canola. SirD catalyzes the O-prenylation of L-tyrosine (L-Tyr) in the presence of dimethylallyl diphosphate (DMAPP) to yield 4-O-dimethylallyl-L-Tyr, and therefore represents probably the first pathway-specific enzyme in the biosynthesis of sirodesmin PL. 4-O-dimethylallyl-L-Tyr, then undergoes condensation with L-Ser in a reaction catalyzed by the non-ribosomal peptide synthase sirP to form the diketopiperazine (DKP) backbone. Further bishydroxylation of the DKP performed by the cytochrome P450 monooxygenase sirC leads to the production of the intermediate phomamide. This step is essential to form the reactive thiol group required for toxicity of sirodesmin PL. The next steps of sirodesmin biosynthesis are not well understood yet, but some predictions could be made from intermediate compounds identification. Phomamide is converted into phomalizarine via oxidation, probably by sirT. Further oxidation, methylation (by sirM or sirN) and reduction steps convert phomalizarine to deacetyl sirodesmin. Finally, acetyltransferase sirH probably acetylates deacetyl sirodesmin to produce sirodesmin PL. This is Thioredoxin reductase sirT from Leptosphaeria maculans (Blackleg fungus).